The following is a 451-amino-acid chain: Uronate isomerase (451 aa).

This sequence belongs to the metallo-dependent hydrolases superfamily. Uronate isomerase family. As to quaternary structure, homotrimer.

The catalysed reaction is D-glucuronate = D-fructuronate. It carries out the reaction aldehydo-D-galacturonate = keto-D-tagaturonate. It participates in carbohydrate metabolism; pentose and glucuronate interconversion. The sequence is that of Uronate isomerase from Thermotoga maritima (strain ATCC 43589 / DSM 3109 / JCM 10099 / NBRC 100826 / MSB8).